The chain runs to 388 residues: LIM/homeobox protein Lhx9 (388 aa).

LIM zinc-binding domains lie at 69–130 and 131–193; these read ISDR…CHLG and ISAS…LSYT. Disordered stretches follow at residues 239 to 263, 321 to 356, and 369 to 388; these read ENEA…RMRT, ENGG…LTDL, and SNMD…TNLF. Positions 267 to 326 form a DNA-binding region, homeobox; the sequence is HHQLRTMKSYFAINHNPDAKDLKQLAQKTGLTKRVLQVWFQNARAKFRRNLLRQENGGVD. The segment covering 344-356 has biased composition (low complexity); that stretch reads LTPPGTATTLTDL. A compositionally biased stretch (polar residues) spans 376 to 388; sequence SGSPSQTTLTNLF.

As to quaternary structure, interacts with LDB1 and LDB2.

It localises to the nucleus. Its function is as follows. Involved in gonadal development. In Rattus norvegicus (Rat), this protein is LIM/homeobox protein Lhx9 (Lhx9).